Consider the following 311-residue polypeptide: Olfactory receptor 1L4 (311 aa).

Residues 1-26 (METKNYSSSTSGFILLGLSSNPKLQK) are Extracellular-facing. N-linked (GlcNAc...) asparagine glycosylation is present at Asn-5. Residues 27–50 (PLFAIFLIMYLLTAVGNVLIILAI) form a helical membrane-spanning segment. Residues 51–58 (YSDPRLHT) are Cytoplasmic-facing. A helical transmembrane segment spans residues 59-80 (PMYFFLSNLSFMDICFTTVIVP). At 81–101 (KMLVNFLSETKIISYVGCLIQ) the chain is on the extracellular side. Cys-98 and Cys-190 are disulfide-bonded. A helical membrane pass occupies residues 102-121 (MYFFMAFGNTDSYLLASMAI). Over 122–140 (DRLVAICNPLHYDVVMKPW) the chain is Cytoplasmic. The chain crosses the membrane as a helical span at residues 141–159 (HCLLMLLGSCSISHLHSLF). Over 160 to 197 (RVLLMSRLSFCASHIIKHFFCDTQPVLKLSCSDTSSSQ) the chain is Extracellular. The chain crosses the membrane as a helical span at residues 198 to 220 (MVVMTETLAVIVTPFLCTIFSYL). At 221–237 (QIIVTVLRIPSAAGKWK) the chain is on the cytoplasmic side. The chain crosses the membrane as a helical span at residues 238 to 260 (AFSTCGSHLTVVVLFYGSVIYVY). At 261-273 (FRPLSMYSVMKGR) the chain is on the extracellular side. The helical transmembrane segment at 274–293 (VATVMYTVVTPMLNPFIYSL) threads the bilayer. Residues 294-311 (RNKDMKRGLKKLRHRIYS) lie on the Cytoplasmic side of the membrane.

Belongs to the G-protein coupled receptor 1 family.

Its subcellular location is the cell membrane. In terms of biological role, odorant receptor. This is Olfactory receptor 1L4 (OR1L4) from Homo sapiens (Human).